Reading from the N-terminus, the 548-residue chain is Chaperonin GroEL (548 aa).

ATP is bound by residues 29-32 (TLGP), 86-90 (DGTTT), Gly413, 476-478 (NAL), and Asp492. Residues 522 to 531 (PDEDDNDDGD) are compositionally biased toward acidic residues. The interval 522-548 (PDEDDNDDGDMGGGAPGMGGMGGMPGM) is disordered. Over residues 532–548 (MGGGAPGMGGMGGMPGM) the composition is skewed to gly residues.

Belongs to the chaperonin (HSP60) family. Forms a cylinder of 14 subunits composed of two heptameric rings stacked back-to-back. Interacts with the co-chaperonin GroES.

The protein resides in the cytoplasm. The catalysed reaction is ATP + H2O + a folded polypeptide = ADP + phosphate + an unfolded polypeptide.. Together with its co-chaperonin GroES, plays an essential role in assisting protein folding. The GroEL-GroES system forms a nano-cage that allows encapsulation of the non-native substrate proteins and provides a physical environment optimized to promote and accelerate protein folding. This is Chaperonin GroEL from Natranaerobius thermophilus (strain ATCC BAA-1301 / DSM 18059 / JW/NM-WN-LF).